A 449-amino-acid polypeptide reads, in one-letter code: Phosphoglucosamine mutase (449 aa).

Ser-101 acts as the Phosphoserine intermediate in catalysis. Mg(2+) contacts are provided by Ser-101, Asp-241, Asp-243, and Asp-245. Ser-101 is subject to Phosphoserine.

This sequence belongs to the phosphohexose mutase family. It depends on Mg(2+) as a cofactor. In terms of processing, activated by phosphorylation.

It catalyses the reaction alpha-D-glucosamine 1-phosphate = D-glucosamine 6-phosphate. In terms of biological role, catalyzes the conversion of glucosamine-6-phosphate to glucosamine-1-phosphate. In Alkaliphilus oremlandii (strain OhILAs) (Clostridium oremlandii (strain OhILAs)), this protein is Phosphoglucosamine mutase.